The primary structure comprises 194 residues: Peptidyl-tRNA hydrolase (194 aa).

Residue Tyr-19 coordinates tRNA. His-24 (proton acceptor) is an active-site residue. Positions 69, 71, and 117 each coordinate tRNA.

This sequence belongs to the PTH family. In terms of assembly, monomer.

Its subcellular location is the cytoplasm. The enzyme catalyses an N-acyl-L-alpha-aminoacyl-tRNA + H2O = an N-acyl-L-amino acid + a tRNA + H(+). In terms of biological role, hydrolyzes ribosome-free peptidyl-tRNAs (with 1 or more amino acids incorporated), which drop off the ribosome during protein synthesis, or as a result of ribosome stalling. Functionally, catalyzes the release of premature peptidyl moieties from peptidyl-tRNA molecules trapped in stalled 50S ribosomal subunits, and thus maintains levels of free tRNAs and 50S ribosomes. In Neorickettsia sennetsu (strain ATCC VR-367 / Miyayama) (Ehrlichia sennetsu), this protein is Peptidyl-tRNA hydrolase.